The following is a 1074-amino-acid chain: MKLKNLYIENIRSYRKLDFTFEDGVTVISGVNGSGKSSLLEACFMGLFGSKILSKDFVLADMIFKGAETAKINLGFEHLGKEYLIEQAFRYSSKSENASSSKCVLYADGENIIDQATRTYEEVRTLLNMDEEAYRNCAYIRQGEIDVLINAKPKDRQRMIDDLLQLGKLEEYRERTGYAKTAVRRLERDTKNSLVGVKAEIEGIESTEPVKALNGLKQKAKETDGSLKELNEKKDYAAARKGELDLRIAEYRERLQEIEVLKEAIRKTQEDKAGCFKEKEAFSGEVQGQRRILLELGEENTGLRDDCGFGDLEIEALLLHQEKEESSAREKVNAVSKDLALLLKEGETGSQALCELEKEKTQAERTLLECRTSIGAANKEIEGYRENIRKLEEESKGLREKAGFKAASGAADEIALLIKEFEEKESLLRDRKNEASTKLGLSLKEKETCDLNLVELEKELQNAGAAVRKGSTEIEALEKELRENSKAVLDIQEQKSEVLAELKGLGFAADQLENLEDFSELLLENKSRLHGKEKELEATLRELENNIRKNRELFAAGKCPTCGQELKGSEIACTAEECEDKKEKLASELADIKVQHAELEKKITRLKDAKKLEKRISDYDIEIEKLQEKAKASGKLIETHRARIEEDALKLESLDKRKQELETSGRQLLSDIKTLQVQEAEARKAHIEGEKTLIEVKTLDRKLAENTAEIESLNGKIRTSLALIENYGERLGELNDKLKALAEKENLSKEKLKALELALEAAQKKENEAKKAHSESEKLLGQAKKLQANLLSMENIKHKISELEAAIRNLAEKVGFLDREILERSERIRQLGEKLEGNRLSELQQKRAQFEQAQAKITENIREKTEEKDSLLKEIGMLENSLKRLRELRKELKALENRQLYLEAVYSNAEELENTYIRVRADMRARNIGALSVLLNEMFAFMYTNNAYSHIELDPEYNLTVYRKDGTPLEPKLLSGGERAIFNLVLRCAIYRLLALGFGGDKADGLPPMILDEPTVFLDRGHIRQLLKLIDMMRSIGVGQIIVVSHDDSLIDSADHVFQVEKDPLTNMSSITRL.

ATP contacts are provided by residues arginine 12, 32-38 (NGSGKSS), and glutamine 142. 2 coiled-coil regions span residues 355–402 (ELEK…REKA) and 452–506 (NLVE…KGLG). Residues 512-611 (LENLEDFSEL…KITRLKDAKK (100 aa)) form the Zinc-hook domain. The Zn(2+) site is built by cysteine 559 and cysteine 562. Coiled coils occupy residues 574–611 (TAEECEDKKEKLASELADIKVQHAELEKKITRLKDAKK), 649–678 (LKLESLDKRKQELETSGRQLLSDIKTLQVQ), 749–823 (KEKL…EILE), and 865–895 (TEEKDSLLKEIGMLENSLKRLRELRKELKAL). 973–978 (LLSGGE) contributes to the ATP binding site.

The protein belongs to the SMC family. RAD50 subfamily. In terms of assembly, homodimer. Forms a heterotetramer composed of two Mre11 subunits and two Rad50 subunits. Zn(2+) is required as a cofactor.

Functionally, part of the Rad50/Mre11 complex, which is involved in the early steps of DNA double-strand break (DSB) repair. The complex may facilitate opening of the processed DNA ends to aid in the recruitment of HerA and NurA. Rad50 controls the balance between DNA end bridging and DNA resection via ATP-dependent structural rearrangements of the Rad50/Mre11 complex. This chain is DNA double-strand break repair Rad50 ATPase, found in Methanosarcina acetivorans (strain ATCC 35395 / DSM 2834 / JCM 12185 / C2A).